Consider the following 603-residue polypeptide: Keratin, type II cuticular Hb4 (603 aa).

Residues 1-173 (MSCRSYRVSS…PNAQRVKRDE (173 aa)) are head. One can recognise an IF rod domain in the interval 173-484 (EKEQIKTLNN…RLLEGEEIRI (312 aa)). Positions 174–208 (KEQIKTLNNKFASFIDKVRFLEQQNKLLETKWSFL) are coil 1A. The linker 1 stretch occupies residues 209-218 (QEQKCARSNL). A coil 1B region spans residues 219–319 (EPLFDNYITN…YHEEIEMLQS (101 aa)). The linker 12 stretch occupies residues 320-336 (HISETSVIVKMDNSRDL). Residues 337 to 480 (NLDGIIAEVK…VTYRRLLEGE (144 aa)) form a coil 2 region. The tract at residues 481-603 (EIRICEGVGP…STTTSRRTRY (123 aa)) is tail. The disordered stretch occupies residues 579–603 (CSGGRGNRSSSVRFSSTTTSRRTRY).

Belongs to the intermediate filament family. Heterotetramer of two type I and two type II keratins. In skin, only expressed in the suprabasal cells of tail scale epidermis. Suprabasally expressed in stratified squamous epithelia and also in the posterior unit of the complex filiform papillae of tongue. Expressed in rare anatomical sites in which an orthokeratinized stratum corneum would be too soft and a hard keratinized structure would be too rigid to meet the functional requirement of the respective epithelia.

This is Keratin, type II cuticular Hb4 (Krt84) from Mus musculus (Mouse).